A 791-amino-acid polypeptide reads, in one-letter code: Ubiquitin carboxyl-terminal hydrolase 10-A (791 aa).

Polar residues-rich tracts occupy residues 118–139 and 270–284; these read FSESSIPDGSGNADSDGTSGTG and DTTENLGVTNGQTLE. Disordered regions lie at residues 118 to 156 and 270 to 291; these read FSESSIPDGSGNADSDGTSGTGQRERKKKKKRPPGYYSY and DTTENLGVTNGQTLESPEEDTA. Residues 408–788 enclose the USP domain; sequence RGLINKGNWC…TAYLLYYRRV (381 aa). The active-site Nucleophile is C417. A disordered region spans residues 560–580; that stretch reads EVNKEEQEGSDEEWEQVGPRN. H742 serves as the catalytic Proton acceptor.

Belongs to the peptidase C19 family. USP10 subfamily.

It is found in the cytoplasm. Its subcellular location is the nucleus. It catalyses the reaction Thiol-dependent hydrolysis of ester, thioester, amide, peptide and isopeptide bonds formed by the C-terminal Gly of ubiquitin (a 76-residue protein attached to proteins as an intracellular targeting signal).. Hydrolase that can remove conjugated ubiquitin from target proteins such as p53/tp53, rps2/us5, rps3/us3, rps10/eS10, becn1, snx3 and cftr. Acts as an essential regulator of p53/tp53 stability: in unstressed cells, specifically deubiquitinates p53/tp53 in the cytoplasm, leading to counteracts MDM2 action and stabilize p53/tp53. Following DNA damage, translocates to the nucleus and deubiquitinates p53/tp53, leading to regulate the p53/TP53-dependent DNA damage response. Component of a regulatory loop that controls autophagy and p53/tp53 levels. Plays a key role in 40S ribosome subunit recycling when a ribosome has stalled during translation: acts both by inhibiting formation of stress granules, which store stalled translation pre-initiation complexes, and mediating deubiquitination of 40S ribosome subunits. Deubiquitinates cftr in early endosomes, enhancing its endocytic recycling. This is Ubiquitin carboxyl-terminal hydrolase 10-A (usp10-a) from Xenopus laevis (African clawed frog).